The primary structure comprises 1088 residues: DNA damage-binding protein 1a (1088 aa).

It belongs to the DDB1 family. In terms of assembly, component of the CDD complex, at least composed of COP10, DET1 and DDB1A. Component of the CUL4-RBX1-CDD complex. Component of the CUL4-RBX1-DDB1-PRL1 E3 ubiquitin-protein ligase complex. Component of the UV-DDB complex, which is composed of DDB1A and DDB2. Interacts with RAE1. Interacts with WDR55. Interacts with ATCSA-1. Interacts with DDA1. Binds to ASG2; the subcellular localization of this complex depends on ASG2 farnesylation status. Binds to KTN80.2/DWA3. Interacts with HTD1. Interacts directly with DHU1.

The protein localises to the cytoplasm. It is found in the nucleus. It participates in protein modification; protein ubiquitination. Component of light signal transduction machinery. Involved in repression of photomorphogenesis in darkness by participating in the CDD complex, a complex probably required to regulate the activity of ubiquitin conjugating enzymes (E2s). Repression of photomorphogenesis is probably mediated by ubiquitination and subsequent degradation of photomorphogenesis-promoting factors such as HY5, HYH and LAF1. Plays a role in DNA repair by forming with DDB2 the UV-damaged DNA-binding protein complex (UV-DDB). Component of the CUL4-RBX1-DDB1-PRL1 E3 ubiquitin-protein ligase complex. This chain is DNA damage-binding protein 1a, found in Arabidopsis thaliana (Mouse-ear cress).